The following is an 80-amino-acid chain: Large ribosomal subunit protein uL24 (80 aa).

The protein belongs to the universal ribosomal protein uL24 family. Part of the 50S ribosomal subunit.

Functionally, one of two assembly initiator proteins, it binds directly to the 5'-end of the 23S rRNA, where it nucleates assembly of the 50S subunit. One of the proteins that surrounds the polypeptide exit tunnel on the outside of the subunit. The polypeptide is Large ribosomal subunit protein uL24 (Chlorobaculum parvum (strain DSM 263 / NCIMB 8327) (Chlorobium vibrioforme subsp. thiosulfatophilum)).